Consider the following 431-residue polypeptide: Divergent protein kinase domain 1B (431 aa).

Residues 1–30 (MRRLRRLVHLVLLCPFSKGLQGRLPGLRVK) lie on the Cytoplasmic side of the membrane. A May mediate ER retention motif is present at residues 5–6 (RR). Residues 31–51 (YVLLVWLGIFVGSWMVYVHYS) traverse the membrane as a helical segment. The Lumenal segment spans residues 52–431 (SYSELCRGHV…WREISNTNYS (380 aa)). 2 disulfide bridges follow: Cys57–Cys94 and Cys62–Cys117.

The protein belongs to the DIPK family. Among the many cysteines in the lumenal domain, most are probably involved in disulfide bonds. As to expression, expressed in kidney, testis, lung, heart, stomach, intestine, pancreas, liver and salivary gland. Strongly expressed in acute pancreatitis, brain, and in peripheral endothelial cells.

The protein localises to the endoplasmic reticulum membrane. The protein is Divergent protein kinase domain 1B (Dipk1b) of Mus musculus (Mouse).